The chain runs to 414 residues: L-cysteine:1D-myo-inositol 2-amino-2-deoxy-alpha-D-glucopyranoside ligase (414 aa).

A disordered region spans residues 1–38 (MRSWPAPEVPNLPEAGLPGPALPLHLHDTATGTVRPTR). Residues 11-38 (NLPEAGLPGPALPLHLHDTATGTVRPTR) are compositionally biased toward low complexity. Cys48 is a Zn(2+) binding site. L-cysteinyl-5'-AMP-binding positions include 48–51 (CGIT), Thr63, and 86–88 (NVT). The 'HIGH' region signature appears at 50–60 (ITPYDATHLGH). The 'ERGGDP' region motif lies at 188 to 193 (ERGGDP). Trp228 contacts L-cysteinyl-5'-AMP. Residue Cys232 participates in Zn(2+) binding. An L-cysteinyl-5'-AMP-binding site is contributed by 250-252 (GSD). His257 is a binding site for Zn(2+). Val284 serves as a coordination point for L-cysteinyl-5'-AMP. The 'KMSKS' region signature appears at 290 to 294 (KMSKS).

The protein belongs to the class-I aminoacyl-tRNA synthetase family. MshC subfamily. As to quaternary structure, monomer. Zn(2+) is required as a cofactor.

It catalyses the reaction 1D-myo-inositol 2-amino-2-deoxy-alpha-D-glucopyranoside + L-cysteine + ATP = 1D-myo-inositol 2-(L-cysteinylamino)-2-deoxy-alpha-D-glucopyranoside + AMP + diphosphate + H(+). In terms of biological role, catalyzes the ATP-dependent condensation of GlcN-Ins and L-cysteine to form L-Cys-GlcN-Ins. This chain is L-cysteine:1D-myo-inositol 2-amino-2-deoxy-alpha-D-glucopyranoside ligase, found in Thermomonospora curvata (strain ATCC 19995 / DSM 43183 / JCM 3096 / KCTC 9072 / NBRC 15933 / NCIMB 10081 / Henssen B9).